A 100-amino-acid chain; its full sequence is NADH-quinone oxidoreductase subunit K (100 aa).

The next 3 membrane-spanning stretches (helical) occupy residues 2–22 (VTLN…LVGV), 28–48 (LLML…GLVA), and 63–83 (FFII…LILW).

This sequence belongs to the complex I subunit 4L family. NDH-1 is composed of 14 different subunits. Subunits NuoA, H, J, K, L, M, N constitute the membrane sector of the complex.

The protein resides in the cell inner membrane. The enzyme catalyses a quinone + NADH + 5 H(+)(in) = a quinol + NAD(+) + 4 H(+)(out). In terms of biological role, NDH-1 shuttles electrons from NADH, via FMN and iron-sulfur (Fe-S) centers, to quinones in the respiratory chain. The immediate electron acceptor for the enzyme in this species is believed to be ubiquinone. Couples the redox reaction to proton translocation (for every two electrons transferred, four hydrogen ions are translocated across the cytoplasmic membrane), and thus conserves the redox energy in a proton gradient. In Wolinella succinogenes (strain ATCC 29543 / DSM 1740 / CCUG 13145 / JCM 31913 / LMG 7466 / NCTC 11488 / FDC 602W) (Vibrio succinogenes), this protein is NADH-quinone oxidoreductase subunit K.